The primary structure comprises 365 residues: Peptide chain release factor 2 (365 aa).

Q252 is subject to N5-methylglutamine.

It belongs to the prokaryotic/mitochondrial release factor family. In terms of processing, methylated by PrmC. Methylation increases the termination efficiency of RF2.

The protein localises to the cytoplasm. Its function is as follows. Peptide chain release factor 2 directs the termination of translation in response to the peptide chain termination codons UGA and UAA. This chain is Peptide chain release factor 2, found in Klebsiella pneumoniae (strain 342).